The chain runs to 481 residues: Aspartyl/glutamyl-tRNA(Asn/Gln) amidotransferase subunit B (481 aa).

It belongs to the GatB/GatE family. GatB subfamily. In terms of assembly, heterotrimer of A, B and C subunits.

It carries out the reaction L-glutamyl-tRNA(Gln) + L-glutamine + ATP + H2O = L-glutaminyl-tRNA(Gln) + L-glutamate + ADP + phosphate + H(+). The catalysed reaction is L-aspartyl-tRNA(Asn) + L-glutamine + ATP + H2O = L-asparaginyl-tRNA(Asn) + L-glutamate + ADP + phosphate + 2 H(+). Allows the formation of correctly charged Asn-tRNA(Asn) or Gln-tRNA(Gln) through the transamidation of misacylated Asp-tRNA(Asn) or Glu-tRNA(Gln) in organisms which lack either or both of asparaginyl-tRNA or glutaminyl-tRNA synthetases. The reaction takes place in the presence of glutamine and ATP through an activated phospho-Asp-tRNA(Asn) or phospho-Glu-tRNA(Gln). The polypeptide is Aspartyl/glutamyl-tRNA(Asn/Gln) amidotransferase subunit B (Pseudomonas putida (strain W619)).